The primary structure comprises 187 residues: UPF0301 protein SO_3346 (187 aa).

Belongs to the UPF0301 (AlgH) family.

In Shewanella oneidensis (strain ATCC 700550 / JCM 31522 / CIP 106686 / LMG 19005 / NCIMB 14063 / MR-1), this protein is UPF0301 protein SO_3346.